The primary structure comprises 202 residues: Nucleoside triphosphate pyrophosphatase (202 aa).

D79 functions as the Proton acceptor in the catalytic mechanism.

Belongs to the Maf family. A divalent metal cation is required as a cofactor.

The protein localises to the cytoplasm. The catalysed reaction is a ribonucleoside 5'-triphosphate + H2O = a ribonucleoside 5'-phosphate + diphosphate + H(+). It carries out the reaction a 2'-deoxyribonucleoside 5'-triphosphate + H2O = a 2'-deoxyribonucleoside 5'-phosphate + diphosphate + H(+). Nucleoside triphosphate pyrophosphatase. May have a dual role in cell division arrest and in preventing the incorporation of modified nucleotides into cellular nucleic acids. The protein is Nucleoside triphosphate pyrophosphatase of Rhodopseudomonas palustris (strain ATCC BAA-98 / CGA009).